An 872-amino-acid polypeptide reads, in one-letter code: Leucine--tRNA ligase (872 aa).

Positions 42–52 match the 'HIGH' region motif; the sequence is PYPSGKLHMGH. A 'KMSKS' region motif is present at residues 632 to 636; sequence KMSKS. Residue lysine 635 participates in ATP binding.

Belongs to the class-I aminoacyl-tRNA synthetase family.

The protein resides in the cytoplasm. The enzyme catalyses tRNA(Leu) + L-leucine + ATP = L-leucyl-tRNA(Leu) + AMP + diphosphate. This is Leucine--tRNA ligase from Chromobacterium violaceum (strain ATCC 12472 / DSM 30191 / JCM 1249 / CCUG 213 / NBRC 12614 / NCIMB 9131 / NCTC 9757 / MK).